A 420-amino-acid polypeptide reads, in one-letter code: Pyridinium-3,5-bisthiocarboxylic acid mononucleotide nickel insertion protein (420 aa).

Positions 81–104 are disordered; it reads NHEHKHNHHEIKNDEPAHSHEHHH. Over residues 90-99 the composition is skewed to basic and acidic residues; the sequence is EIKNDEPAHS.

This sequence belongs to the LarC family.

It catalyses the reaction Ni(II)-pyridinium-3,5-bisthiocarboxylate mononucleotide = pyridinium-3,5-bisthiocarboxylate mononucleotide + Ni(2+). Functionally, involved in the biosynthesis of a nickel-pincer cofactor ((SCS)Ni(II) pincer complex). Binds Ni(2+), and functions in nickel delivery to pyridinium-3,5-bisthiocarboxylic acid mononucleotide (P2TMN), to form the mature cofactor. Is thus probably required for the activation of nickel-pincer cofactor-dependent enzymes. This is Pyridinium-3,5-bisthiocarboxylic acid mononucleotide nickel insertion protein from Clostridium acetobutylicum (strain ATCC 824 / DSM 792 / JCM 1419 / IAM 19013 / LMG 5710 / NBRC 13948 / NRRL B-527 / VKM B-1787 / 2291 / W).